Consider the following 161-residue polypeptide: Putative allophycocyanin subunit alpha 2 (161 aa).

N71 is subject to N4-methylasparagine. Residue C81 participates in (2R,3E)-phycocyanobilin binding.

It belongs to the phycobiliprotein family. As to quaternary structure, heterohexamer of two alpha chains, one alpha-B chain and three beta chains. In terms of processing, contains one covalently linked phycocyanobilin chromophore. The chromophore is added by phycocyanobilin lyase CpcS 1.

It localises to the cellular thylakoid membrane. Its function is as follows. Light-harvesting photosynthetic bile pigment-protein from the phycobiliprotein complex. Allophycocyanin has a maximum absorption at approximately 650 to 653 nanometers. The polypeptide is Putative allophycocyanin subunit alpha 2 (apcA2) (Nostoc sp. (strain PCC 7120 / SAG 25.82 / UTEX 2576)).